The chain runs to 151 residues: NAD(P)H-quinone oxidoreductase subunit N (151 aa).

The protein belongs to the complex I NdhN subunit family. As to quaternary structure, NDH-1 can be composed of about 15 different subunits; different subcomplexes with different compositions have been identified which probably have different functions.

The protein resides in the cellular thylakoid membrane. The catalysed reaction is a plastoquinone + NADH + (n+1) H(+)(in) = a plastoquinol + NAD(+) + n H(+)(out). The enzyme catalyses a plastoquinone + NADPH + (n+1) H(+)(in) = a plastoquinol + NADP(+) + n H(+)(out). Functionally, NDH-1 shuttles electrons from an unknown electron donor, via FMN and iron-sulfur (Fe-S) centers, to quinones in the respiratory and/or the photosynthetic chain. The immediate electron acceptor for the enzyme in this species is believed to be plastoquinone. Couples the redox reaction to proton translocation, and thus conserves the redox energy in a proton gradient. Cyanobacterial NDH-1 also plays a role in inorganic carbon-concentration. The protein is NAD(P)H-quinone oxidoreductase subunit N of Acaryochloris marina (strain MBIC 11017).